We begin with the raw amino-acid sequence, 2280 residues long: Metacaspase-3 (2280 aa).

Disordered stretches follow at residues 56-83 (ILSKGKKNKNENIKKRINEKDNDTDRED), 202-284 (YSTE…THRG), 791-819 (YKNSMNSNDDIQNSNNNNNNNNNNNMVNN), 931-954 (DDNSVQDSFFSRTERSNSQNRYDK), 994-1015 (SGKYQRNIPQNDDNDHNDDDSE), 1278-1306 (KTNNKTNSNYSSNNNNDNNNNNNNSNPFI), and 1469-1500 (KAPTNVKAPTNVKAPTNVNAPTNVNAPTNANA). The span at 63–83 (NKNENIKKRINEKDNDTDRED) shows a compositional bias: basic and acidic residues. Composition is skewed to polar residues over residues 205–219 (EHTQSIDNNNITSKR) and 228–278 (DKAQ…NRKG). Composition is skewed to low complexity over residues 793–819 (NSMNSNDDIQNSNNNNNNNNNNNMVNN) and 931–941 (DDNSVQDSFFS). Low complexity-rich tracts occupy residues 1278 to 1303 (KTNNKTNSNYSSNNNNDNNNNNNNSN) and 1482 to 1500 (APTNVNAPTNVNAPTNANA).

It belongs to the peptidase C14B family.

Protease that cleaves specifically after arginine or lysine residues. The polypeptide is Metacaspase-3 (Plasmodium falciparum (isolate 3D7)).